The chain runs to 408 residues: Putative agmatinase 3 (408 aa).

Residues 1 to 21 form the signal peptide; sequence MKSVEWFTWGVFLLLSGFGEA. Mn(2+) contacts are provided by His-198, Asp-222, His-224, Asp-226, Asp-319, and Asp-321.

The protein belongs to the arginase family. Mn(2+) serves as cofactor.

It carries out the reaction agmatine + H2O = urea + putrescine. This Schizosaccharomyces pombe (strain 972 / ATCC 24843) (Fission yeast) protein is Putative agmatinase 3.